Here is a 265-residue protein sequence, read N- to C-terminus: Tryptophan synthase alpha chain (265 aa).

Residues E49 and D60 each act as proton acceptor in the active site.

Belongs to the TrpA family. In terms of assembly, tetramer of two alpha and two beta chains.

It carries out the reaction (1S,2R)-1-C-(indol-3-yl)glycerol 3-phosphate + L-serine = D-glyceraldehyde 3-phosphate + L-tryptophan + H2O. It functions in the pathway amino-acid biosynthesis; L-tryptophan biosynthesis; L-tryptophan from chorismate: step 5/5. Its function is as follows. The alpha subunit is responsible for the aldol cleavage of indoleglycerol phosphate to indole and glyceraldehyde 3-phosphate. The protein is Tryptophan synthase alpha chain of Paracoccus denitrificans (strain Pd 1222).